The sequence spans 380 residues: Pregnancy-associated glycoprotein 6 (380 aa).

The signal sequence occupies residues 1 to 15 (MKWLVLLGLVSISEC). Residues 16 to 53 (IVKIPLRRVKTMRKTLSEKNMLNNFLKEHAYRLSQISF) constitute a propeptide, activation peptide. N57 and N74 each carry an N-linked (GlcNAc...) asparagine glycan. In terms of domain architecture, Peptidase A1 spans 71-377 (YLGNITIGTP…DRGHDRIGLA (307 aa)). D89 is a catalytic residue. C102 and C107 form a disulfide bridge. An N-linked (GlcNAc...) asparagine glycan is attached at N125. C261 and C265 are oxidised to a cystine. The active site involves D270. A disulfide bond links C303 and C337.

Belongs to the peptidase A1 family. In terms of tissue distribution, trophoblast and placental tissue. Produced specifically in the invasive binucleate cells of the placenta.

Its subcellular location is the secreted. It localises to the extracellular space. In Ovis aries (Sheep), this protein is Pregnancy-associated glycoprotein 6.